The sequence spans 86 residues: Probable weak neurotoxin NNAM2I (86 aa).

Residues 1 to 21 form the signal peptide; that stretch reads MKTLPLTLVVVTIVCLDLGYT. 5 disulfides stabilise this stretch: Cys-24–Cys-45, Cys-27–Cys-32, Cys-38–Cys-63, Cys-67–Cys-78, and Cys-79–Cys-84.

It belongs to the three-finger toxin family. Ancestral subfamily. Orphan group II sub-subfamily. Expressed by the venom gland.

The protein resides in the secreted. Binds with low affinity to muscular (alpha-1-beta-1-delta-epsilon/CHRNA1-CHRNB1-CHRND-CHRNE) and very low affinity to neuronal (alpha-7/CHRNA7) nicotinic acetylcholine receptor (nAChR). This chain is Probable weak neurotoxin NNAM2I, found in Naja atra (Chinese cobra).